A 115-amino-acid chain; its full sequence is Nucleoid-associated protein Npun_F0448 (115 aa).

It belongs to the YbaB/EbfC family. As to quaternary structure, homodimer.

The protein resides in the cytoplasm. Its subcellular location is the nucleoid. Binds to DNA and alters its conformation. May be involved in regulation of gene expression, nucleoid organization and DNA protection. The polypeptide is Nucleoid-associated protein Npun_F0448 (Nostoc punctiforme (strain ATCC 29133 / PCC 73102)).